Reading from the N-terminus, the 214-residue chain is External core antigen (214 aa).

An N-terminal signal peptide occupies residues 1 to 19 (MQLFHLCLIISCTCPTVQA). An HBEAG region spans residues 25-27 (GWL). The tract at residues 165-214 (NAPILSTLPETTVVRRRDRGRSPRRRTPSPRRRRSPSPRRRRSQSRESQC) is disordered. The segment covering 178–207 (VRRRDRGRSPRRRTPSPRRRRSPSPRRRRS) has biased composition (basic residues). The stretch at 186-192 (SPRRRTP) is one 1; half-length repeat. The 3 X 8 AA repeats of S-P-R-R-R-R-S-[PQ] stretch occupies residues 186 to 208 (SPRRRTPSPRRRRSPSPRRRRSQ). A propeptide spanning residues 186–214 (SPRRRTPSPRRRRSPSPRRRRSQSRESQC) is cleaved from the precursor. 2 tandem repeats follow at residues 193 to 200 (SPRRRRSP) and 201 to 208 (SPRRRRSQ).

It belongs to the orthohepadnavirus precore antigen family. In terms of assembly, homodimerizes. In terms of processing, phosphorylated. Cleaved by host furin.

It localises to the secreted. The protein localises to the host nucleus. Functionally, may regulate immune response to the intracellular capsid in acting as a T-cell tolerogen, by having an immunoregulatory effect which prevents destruction of infected cells by cytotoxic T-cells. This immune regulation may predispose to chronicity during perinatal infections and prevent severe liver injury during adult infections. In Hepatitis B virus genotype A2 subtype adw2 (strain Rutter 1979) (HBV-A), this protein is External core antigen.